Reading from the N-terminus, the 4687-residue chain is Plectin (4687 aa).

A globular 1 region spans residues 1 to 1473; that stretch reads MVAGMLMPLD…SELTTLTSQY (1473 aa). Phosphoserine is present on arginine 21. Valine 26 bears the Phosphotyrosine mark. The tract at residues 111–158 is disordered; it reads RRRSPHVQTMQGPLGCPPKRGPLPAEDPAREERQVYRRKEREEGAPET. A compositionally biased stretch (basic and acidic residues) spans 137 to 154; that stretch reads DPAREERQVYRRKEREEG. The tract at residues 181 to 406 is actin-binding; that stretch reads DERDRVQKKT…YVSSLYDAMP (226 aa). 2 consecutive Calponin-homology (CH) domains span residues 185-288 and 301-406; these read RVQK…LHFK and MTAK…DAMP. One copy of the Spectrin 1 repeat lies at 648–722; that stretch reads LQSTQRRPEL…ERARNDESQL (75 aa). At serine 723 the chain carries Phosphoserine. Spectrin repeat units lie at residues 743-827 and 840-933; these read KLLN…REDH and LQTQ…AIVQ. Residue threonine 818 is modified to Phosphothreonine. An SH3 domain is found at 944–1001; that stretch reads RGHVPLLAVCDYKQVEVTVHKGDQCQLVGPAQPFHWKVLSSSGSEAAVPSVCFLVPPP. Serine 1050 carries the post-translational modification Phosphoserine. Residues 1318 to 1418 form a Spectrin 4 repeat; sequence RERVTQLLER…QKFAKQYINA (101 aa). The residue at position 1438 (serine 1438) is a Phosphoserine. Coiled coils occupy residues 1472–1692 and 1724–2760; these read QYIK…ERWL and SFAE…TSQA. A central fibrous rod domain region spans residues 1474 to 2758; it reads IKFISETLRR…LAHSEEIATS (1285 aa). The segment at 1623 to 1647 is disordered; the sequence is EEAEAQKRQAQEEAERLRRQVQDES. Serine 1724 carries the post-translational modification Phosphoserine. Lysine 1728 is modified (N6-acetyllysine). Disordered regions lie at residues 1741-1764, 1796-1846, 2096-2139, 2164-2188, and 2218-2307; these read VTVT…ERAR, SLAQ…GTAQ, EDTM…AEEE, LRER…KRLQ, and RLRS…DAEM. Composition is skewed to basic and acidic residues over residues 1801–1839, 2096–2111, and 2119–2131; these read DAEK…KQRQ, EDTM…EAAR, and EEQR…ERVQ. Residues 2173–2182 show a composition bias toward low complexity; it reads ARQLQLAQEA. Residues 2218–2261 are compositionally biased toward basic and acidic residues; it reads RLRSEAEAARRAAEEAEEAREQAEREAAQSRKQVEEAERLKQSA. Positions 2262–2275 are enriched in low complexity; sequence EEQAQAQAQAQAAA. A compositionally biased stretch (basic and acidic residues) spans 2276 to 2291; the sequence is EKLRKEAEQEAARRAQ. Serine 2634 bears the Phosphoserine mark. Lysine 2639 bears the N6-acetyllysine mark. The disordered stretch occupies residues 2671 to 2710; sequence QEEQQRQQQQMEQEKQELVASMEEARRRQREAEEGVRRKQ. Basic and acidic residues predominate over residues 2682–2710; sequence EQEKQELVASMEEARRRQREAEEGVRRKQ. Residues 2759–4687 are globular 2; it reads QAAATKALPN…SLGGPESAVA (1929 aa). Serine 2777 carries the post-translational modification Phosphoserine. Tyrosine 2784 carries the post-translational modification Phosphotyrosine. 6 Plectin repeats span residues 2791-2828, 2829-2866, 2867-2904, 2905-2942, 2943-2980, and 2984-3018; these read QKVP…REDV, RHYL…PGTA, LILL…PELH, HKLL…RDHG, IRLL…EEMN, and ADPS…PETG. Serine 2805 carries the post-translational modification Phosphoserine. At threonine 2889 the chain carries Phosphothreonine. Tyrosine 3036 is modified (phosphotyrosine). Lysine 3056 and lysine 3094 each carry N6-acetyllysine. Plectin repeat units follow at residues 3119–3156, 3157–3194, 3195–3232, 3233–3270, 3271–3308, and 3311–3346; these read ALVP…ADEV, RQAL…PEVA, VALL…PEMH, EKLL…REQG, LRLL…KETN, and LTSP…QLTG. A Phosphotyrosine modification is found at tyrosine 3365. Lysine 3423 carries the N6-acetyllysine modification. Plectin repeat units follow at residues 3488-3525, 3526-3563, 3564-3601, 3602-3639, and 3643-3677; these read RTLL…ASTA, TLLL…PELH, EKLL…RDHA, IRLL…EEMN, and ADPS…PETG. At serine 3583 the chain carries Phosphoserine. The residue at position 3788 (threonine 3788) is a Phosphothreonine. At tyrosine 3793 the chain carries Phosphotyrosine. Plectin repeat units follow at residues 3823–3860, 3861–3898, 3899–3936, 3937–3974, and 3978–4011; these read WRYL…AEVA, RLLL…PELH, DRLL…AEEA, LRLL…KDTH, and SEPS…DNSG. A Phosphothreonine modification is found at threonine 4033. The residue at position 4057 (serine 4057) is a Phosphoserine. Plectin repeat units follow at residues 4066 to 4103, 4104 to 4141, 4142 to 4179, 4180 to 4217, 4221 to 4255, and 4268 to 4308; these read QKFL…PGTA, FELL…PEFK, DKLL…KDHG, IRLL…EEMN, TDPS…PQTG, and RKTS…HQTY. A binding to intermediate filaments region spans residues 4253–4303; sequence QTGLCLLPLKEKKRERKTSSKSSVRKRRVVIVDPETGKEMSVYEAYRKGLI. A phosphoserine mark is found at serine 4385, serine 4387, serine 4388, serine 4389, serine 4392, serine 4393, serine 4394, and serine 4395. Tyrosine 4396 bears the Phosphotyrosine mark. Serine 4399 and serine 4409 each carry phosphoserine. 5 Plectin repeats span residues 4411–4448, 4449–4486, 4487–4524, 4525–4562, and 4563–4600; these read SDPT…NITG, QRLL…KIMV, DRIN…YEAG, QRFL…ARTA, and QKLR…EGTG. Threonine 4414 bears the Phosphothreonine mark. Threonine 4542 carries the post-translational modification Phosphothreonine; by CDK1. A phosphoserine mark is found at serine 4610 and serine 4616. Residues 4614 to 4674 are compositionally biased toward low complexity; sequence YYSPYSVSGS…SGYGRRYASG (61 aa). The segment at 4614 to 4687 is disordered; sequence YYSPYSVSGS…SLGGPESAVA (74 aa). The residue at position 4618 (tyrosine 4618) is a Phosphotyrosine. 3 positions are modified to phosphoserine: serine 4619, serine 4621, and serine 4625. Threonine 4626 is subject to Phosphothreonine. Residues 4628 to 4643 form a 4 X 4 AA tandem repeats of G-S-R-X region; it reads GSRTGSRTGSRAGSRR. Serine 4629 carries the phosphoserine modification. Arginine 4630 and arginine 4643 each carry omega-N-methylarginine. 2 positions are modified to phosphoserine: serine 4645 and serine 4678.

The protein belongs to the plakin or cytolinker family. In terms of assembly, homodimer or homotetramer. Interacts (via actin-binding domain) with SYNE3. Interacts (via calponin-homology (CH) 1 domain) with VIM (via rod region). Interacts (via N-terminus) with DST isoform 2 (via N-terminus). Interacts with FER. Interacts with TOR1A. Interacts with ANK3. Identified in complexes that contain VIM, EZR, AHNAK, BFSP1, BFSP2, ANK2, PLEC, PRX and spectrin. Phosphorylated by CDK1; regulates dissociation from intermediate filaments during mitosis. Isoform 2 is phosphorylated on Ser-21 and Tyr-26. Widely expressed with highest expression in skeletal muscle and lowest in thymus.

It localises to the cytoplasm. The protein localises to the cytoskeleton. It is found in the cell junction. Its subcellular location is the hemidesmosome. The protein resides in the cell projection. It localises to the podosome. Interlinks intermediate filaments with microtubules and microfilaments and anchors intermediate filaments to desmosomes or hemidesmosomes. May be involved not only in the cross-linking and stabilization of cytoskeletal intermediate filaments network, but also in the regulation of their dynamics. The chain is Plectin (Plec) from Rattus norvegicus (Rat).